A 262-amino-acid polypeptide reads, in one-letter code: Small ribosomal subunit protein eS4A (262 aa).

An S4 RNA-binding domain is found at 42-105 (LPLIVFLRNR…GEHFRLVYDI (64 aa)).

This sequence belongs to the eukaryotic ribosomal protein eS4 family. Component of the small ribosomal subunit (SSU). Mature yeast ribosomes consist of a small (40S) and a large (60S) subunit. The 40S small subunit contains 1 molecule of ribosomal RNA (18S rRNA) and at least 33 different proteins. The large 60S subunit contains 3 rRNA molecules (25S, 5.8S and 5S rRNA) and at least 46 different proteins.

It is found in the cytoplasm. Its function is as follows. Component of the ribosome, a large ribonucleoprotein complex responsible for the synthesis of proteins in the cell. The small ribosomal subunit (SSU) binds messenger RNAs (mRNAs) and translates the encoded message by selecting cognate aminoacyl-transfer RNA (tRNA) molecules. The large subunit (LSU) contains the ribosomal catalytic site termed the peptidyl transferase center (PTC), which catalyzes the formation of peptide bonds, thereby polymerizing the amino acids delivered by tRNAs into a polypeptide chain. The nascent polypeptides leave the ribosome through a tunnel in the LSU and interact with protein factors that function in enzymatic processing, targeting, and the membrane insertion of nascent chains at the exit of the ribosomal tunnel. The chain is Small ribosomal subunit protein eS4A (rps401) from Schizosaccharomyces pombe (strain 972 / ATCC 24843) (Fission yeast).